We begin with the raw amino-acid sequence, 374 residues long: MSAQVMLEEMARKYAINAVKADKEGNAEEAITNYKKAIEVLAQLVSLYRDGSTAAIYEQMINEYKRRIEVLKELIPADGAGNGNGKHSQVSVDDLVMKEKPKVNFNDIVGLEDVKEALKEAIVYPTRRPDLFPLGWPRGILVYGPPGCGKTMIAAAVANEIDSYFIQVDAASVMSKWLGEAEKNVAKIFNSARELSKKDGKPVIIFIDEIDALLGTYNSENGGEVRVRNQFLKEMDGLQDKSENFKVYVIGATNKPWRLDEPFLRRFQKRIYIRLPDIEQRKSLLLHYTSKIKMDNVNIDELAKMTEGYTASDIKDIVQAAHIRVVKEMFDKKLEQPRAVNMEDFKEILKIRKPSVNSEVIKVYEAWHEKYKAL.

The MIT domain maps to 11–73 (ARKYAINAVK…YKRRIEVLKE (63 aa)). 144-151 (GPPGCGKT) serves as a coordination point for ATP.

This sequence belongs to the AAA ATPase family. As to quaternary structure, interacts with CdvB.

The protein resides in the cytoplasm. Its subcellular location is the nucleoid. Part of a cell division machinery. The CdvA, CdvB and CdvC proteins polymerize between segregating nucleoids and persist throughout cell division, forming a successively smaller structure during constriction. This chain is Cell division protein C, found in Sulfolobus acidocaldarius (strain ATCC 33909 / DSM 639 / JCM 8929 / NBRC 15157 / NCIMB 11770).